Here is a 459-residue protein sequence, read N- to C-terminus: Probable ECA polymerase (459 aa).

Helical transmembrane passes span 3-23, 37-57, 65-85, 119-139, 154-174, 181-201, 206-226, 227-247, 340-360, 377-397, and 409-429; these read LTQF…ILTL, IFFS…TCLL, VVPV…YGIY, LASV…FLLF, GVAL…VYFL, WLFF…VVGG, IIIA…ITLW, MLVT…LKRY, LVVM…GLII, YKAA…IVLA, and VFFC…YWLF.

It belongs to the WzyE family. In terms of assembly, probably part of a complex composed of WzxE, WzyE and WzzE.

The protein resides in the cell inner membrane. It participates in bacterial outer membrane biogenesis; enterobacterial common antigen biosynthesis. In terms of biological role, probably involved in the polymerization of enterobacterial common antigen (ECA) trisaccharide repeat units. This Photorhabdus laumondii subsp. laumondii (strain DSM 15139 / CIP 105565 / TT01) (Photorhabdus luminescens subsp. laumondii) protein is Probable ECA polymerase.